Reading from the N-terminus, the 290-residue chain is Triplex capsid protein 1 (290 aa).

This sequence belongs to the herpesviridae TRX1 protein family. As to quaternary structure, interacts with TRX2, MCP and capsid vertex component 2/CVC2.

The protein localises to the virion. The protein resides in the host nucleus. Structural component of the T=16 icosahedral capsid. The capsid is composed of pentamers and hexamers of major capsid protein/MCP, which are linked together by heterotrimers called triplexes. These triplexes are formed by a single molecule of triplex protein 1/TRX1 and two copies of triplex protein 2/TRX2. Additionally, TRX1 is required for efficient transport of TRX2 to the nucleus, which is the site of capsid assembly. The protein is Triplex capsid protein 1 of Human cytomegalovirus (strain AD169) (HHV-5).